Consider the following 199-residue polypeptide: GTP-binding protein Di-Ras2 (199 aa).

GTP is bound by residues 14–21 (GAGGVGKS), 33–39 (RESYIPT), 61–65 (DTTGS), and 121–124 (NKCD). S35 is modified (phosphoserine). The short motif at 36-44 (YIPTVEDTY) is the Effector region element. The residue at position 126 (S126) is a Phosphoserine. 152–153 (AK) provides a ligand contact to GTP. At C196 the chain carries Cysteine methyl ester. C196 carries S-geranylgeranyl cysteine lipidation. Residues 197–199 (VIM) constitute a propeptide, removed in mature form.

It belongs to the small GTPase superfamily. Di-Ras family. In terms of processing, ubiquitinated by the ECS(ASB11) complex via 'Lys-11'-linked ubiquitin chains, leading to its degradation by the proteasome.

Its subcellular location is the cell membrane. The catalysed reaction is GTP + H2O = GDP + phosphate + H(+). Functionally, displays low GTPase activity and exists predominantly in the GTP-bound form. The protein is GTP-binding protein Di-Ras2 (DIRAS2) of Macaca fascicularis (Crab-eating macaque).